A 312-amino-acid polypeptide reads, in one-letter code: Aspartate carbamoyltransferase catalytic subunit (312 aa).

Residues Arg-54 and Thr-55 each contribute to the carbamoyl phosphate site. Lys-83 serves as a coordination point for L-aspartate. Residues Arg-104, His-132, and Gln-135 each contribute to the carbamoyl phosphate site. Arg-165 and Arg-226 together coordinate L-aspartate. Residues Leu-263 and Pro-264 each coordinate carbamoyl phosphate.

The protein belongs to the aspartate/ornithine carbamoyltransferase superfamily. ATCase family. Heterooligomer of catalytic and regulatory chains.

The enzyme catalyses carbamoyl phosphate + L-aspartate = N-carbamoyl-L-aspartate + phosphate + H(+). The protein operates within pyrimidine metabolism; UMP biosynthesis via de novo pathway; (S)-dihydroorotate from bicarbonate: step 2/3. In terms of biological role, catalyzes the condensation of carbamoyl phosphate and aspartate to form carbamoyl aspartate and inorganic phosphate, the committed step in the de novo pyrimidine nucleotide biosynthesis pathway. In Methanothermobacter thermautotrophicus (strain ATCC 29096 / DSM 1053 / JCM 10044 / NBRC 100330 / Delta H) (Methanobacterium thermoautotrophicum), this protein is Aspartate carbamoyltransferase catalytic subunit.